We begin with the raw amino-acid sequence, 108 residues long: Cytochrome c (108 aa).

Heme c-binding residues include cysteine 19, cysteine 22, histidine 23, and methionine 85.

The protein belongs to the cytochrome c family. In terms of processing, binds 1 heme c group covalently per subunit.

It localises to the mitochondrion intermembrane space. Its function is as follows. Electron carrier protein. The oxidized form of the cytochrome c heme group can accept an electron from the heme group of the cytochrome c1 subunit of cytochrome reductase. Cytochrome c then transfers this electron to the cytochrome oxidase complex, the final protein carrier in the mitochondrial electron-transport chain. The polypeptide is Cytochrome c (Stellaria longipes (Longstalk starwort)).